The primary structure comprises 433 residues: Glutamate-rich protein 2 (433 aa).

5 disordered regions span residues 56–86, 113–161, 189–273, 308–344, and 394–433; these read VPAA…LAPP, DSAS…KHPQ, SRQN…SIET, CLED…TRAP, and EKAQ…EDGS. The span at 63–85 shows a compositional bias: pro residues; the sequence is PAPPPPRALRPAPGPPRSAPLAP. The span at 114 to 127 shows a compositional bias: polar residues; sequence SASQARGSEPSSSA. Basic and acidic residues-rich tracts occupy residues 199 to 214 and 244 to 258; these read DPKE…EKPQ and ARKE…DKVS. Over residues 259–273 the composition is skewed to polar residues; sequence LKSSENRPSSRSIET. Acidic residues-rich tracts occupy residues 308–334 and 397–433; these read CLED…EDDE and QEEE…EDGS.

The chain is Glutamate-rich protein 2 (Erich2) from Rattus norvegicus (Rat).